Reading from the N-terminus, the 429-residue chain is Proton extrusion protein PxcA (429 aa).

The tract at residues 139 to 161 (LNGPEAPQTNGDRPDNKPKVETV) is disordered. Over residues 150–161 (DRPDNKPKVETV) the composition is skewed to basic and acidic residues. The next 4 helical transmembrane spans lie at 211–231 (FLLT…IAIT), 306–326 (AYEN…ILLI), 353–373 (LIIL…WEII), and 389–409 (FNFL…KYWI).

This sequence belongs to the CemA family.

It localises to the cell inner membrane. Required for H(+) efflux immediately after light irradiation to form a rapid H(+) concentration gradient across the thylakoid membranes. Together with PxcL, contributes to transient H(+) uptake following dark to light transition. In Picosynechococcus sp. (strain ATCC 27264 / PCC 7002 / PR-6) (Agmenellum quadruplicatum), this protein is Proton extrusion protein PxcA.